Consider the following 365-residue polypeptide: MWVPSRRHLCLTFLLVCVLAAIFFLNVYQDLFYSGLDLLALCPDHNVVSSPVAIFCLAGTPVHPNASDSCPKHPASLSGTWTIYPDGRFGNQMGQYATLLALAQLNGRQAFIQPAMHAVLAPVFRITLPVLAPEVDRHAPWRELELHDWMSEDYAHLKEPWLKLTGFPCSWTFFHHLREQIRSEFTLHDHLRQEAQGVLSQFRLPRTGDRPSTFVGVHVRRGDYLRVMPKRWKGVVGDGAYLQQAMDWFRARYEAPVFVVTSNGMEWCRKNIDTSRGDVIFAGDGREAAPARDFALLVQCNHTIMTIGTFGFWAAYLAGGDTIYLANFTLPTSSFLKIFKPEAAFLPEWVGINADLSPLQMLAGP.

At 1–8 (MWVPSRRH) the chain is on the cytoplasmic side. A helical; Signal-anchor for type II membrane protein transmembrane segment spans residues 9-28 (LCLTFLLVCVLAAIFFLNVY). At 29-365 (QDLFYSGLDL…LSPLQMLAGP (337 aa)) the chain is on the lumenal side. 3 N-linked (GlcNAc...) asparagine glycosylation sites follow: Asn-65, Asn-301, and Asn-327.

Belongs to the glycosyltransferase 11 family.

It localises to the golgi apparatus. The protein localises to the golgi stack membrane. The catalysed reaction is a beta-D-galactosyl-(1-&gt;4)-N-acetyl-beta-D-glucosaminyl derivative + GDP-beta-L-fucose = an alpha-L-Fuc-(1-&gt;2)-beta-D-Gal-(1-&gt;4)-beta-D-GlcNAc derivative + GDP + H(+). It catalyses the reaction a ganglioside GA1 + GDP-beta-L-fucose = a ganglioside Fuc-GA1 + GDP + H(+). The enzyme catalyses a beta-D-Gal-(1-&gt;3)-beta-D-GlcNAc-(1-&gt;3)-beta-D-Gal-(1-&gt;4)-beta-D-Glc-(1&lt;-&gt;1')-Cer(d18:1(4E)) + GDP-beta-L-fucose = alpha-L-fucosyl-(1-&gt;2)- beta-D-galactosyl-(1-&gt;3)-N-acetyl-beta-D-glucosaminyl-(1-&gt;3)-beta-D-galactosyl-(1-&gt;4)-beta-D-glucosyl-(1&lt;-&gt;1')-N-acylsphing-4-enine + GDP + H(+). It carries out the reaction a neolactoside nLc4Cer(d18:1(4E)) + GDP-beta-L-fucose = a neolactoside IV(2)-alpha-Fuc-nLc4Cer(d18:1(4E)) + GDP + H(+). The catalysed reaction is a ganglioside GM1 + GDP-beta-L-fucose = a ganglioside Fuc-GM1 + GDP + H(+). It catalyses the reaction beta-D-galactosyl-(1-&gt;3)-N-acetyl-D-galactosamine + GDP-beta-L-fucose = alpha-L-fucosyl-(1-&gt;2)-beta-D-galactosyl-(1-&gt;3)-N-acetyl-D-galactosamine + GDP + H(+). Its pathway is protein modification; protein glycosylation. Catalyzes the transfer of L-fucose, from a guanosine diphosphate-beta-L-fucose, to the terminal galactose residue of glycoconjugates through an alpha(1,2) linkage leading to H antigen synthesis that is an intermediate substrate in the synthesis of ABO blood group antigens. H antigen is essential for maturation of the glomerular layer of the main olfactory bulb, in cell migration and early cell-cell contacts during tumor associated angiogenesis. Preferentially fucosylates soluble lactose and to a lesser extent fucosylates glycolipids gangliosides GA1 and GM1a. In Sus scrofa (Pig), this protein is Galactoside alpha-(1,2)-fucosyltransferase 1.